Consider the following 210-residue polypeptide: High frequency lysogenization protein HflD homolog (210 aa).

Positions 103–130 form a coiled coil; that stretch reads EAKAKLAERLQQIERQLPLYENDIMADQ.

This sequence belongs to the HflD family.

The protein resides in the cytoplasm. The protein localises to the cell inner membrane. This is High frequency lysogenization protein HflD homolog from Actinobacillus pleuropneumoniae serotype 3 (strain JL03).